The sequence spans 1269 residues: Furin-like protease 1, isoforms 1/1-X/2 (1269 aa).

The disordered stretch occupies residues 1 to 57 (MKNDVVRWSRQPTSNTTNSSSSSRSDSNSTHKHRSKSNKLNARQLGSNAARSCQQRS). The segment covering 13-28 (TSNTTNSSSSSRSDSN) has biased composition (low complexity). N-linked (GlcNAc...) asparagine glycosylation is found at Asn15, Asn18, and Asn28. A compositionally biased stretch (polar residues) spans 38–57 (NKLNARQLGSNAARSCQQRS). The N-linked (GlcNAc...) asparagine glycan is linked to Asn108. A helical transmembrane segment spans residues 119-139 (VFLLALQFSAVVFLCNINVGF). Low complexity predominate over residues 150 to 163 (SAGGSSPAAPSSAP). The tract at residues 150–187 (SAGGSSPAAPSSAPSSPPTVAVPPPPPPSSALKVDPNG) is disordered. Residues 164–178 (SSPPTVAVPPPPPPS) are compositionally biased toward pro residues. An N-linked (GlcNAc...) asparagine glycan is attached at Asn333. The region spanning 340–654 (MWYLNRGGGL…YGLMDAAEMV (315 aa)) is the Peptidase S8 domain. Active-site charge relay system residues include Asp372 and His413. Asn426 carries N-linked (GlcNAc...) asparagine glycosylation. 2 disulfide bridges follow: Cys430–Cys579 and Cys522–Cys552. Ser587 serves as the catalytic Charge relay system. Asn606 carries N-linked (GlcNAc...) asparagine glycosylation. In terms of domain architecture, P/Homo B spans 662-793 (AVPEQQRCEI…SLIFYGTTQS (132 aa)). Cys669 and Cys695 form a disulfide bridge. 2 N-linked (GlcNAc...) asparagine glycosylation sites follow: Asn727 and Asn814. Disordered stretches follow at residues 796–875 (PNDP…PPKQ), 891–1015 (ANGK…NSRI), 1031–1050 (ELEPYENSSPKGKPKQAKQG), and 1057–1083 (LFKPTNGGNSRQGNTKKSPSVPPPSQT). Low complexity-rich tracts occupy residues 811–821 (TTPNSSSTTSN) and 835–851 (PNNFGSSPSGGSKLPLG). N-linked (GlcNAc...) asparagine glycosylation is present at Asn857. A compositionally biased stretch (polar residues) spans 858-868 (KSSYVTNNPLL). Asn897 and Asn908 each carry an N-linked (GlcNAc...) asparagine glycan. Composition is skewed to low complexity over residues 905–915 (NKGNKSNNGNK) and 929–940 (TTQSTIIQTSTS). Residues 975–985 (KSYDEKSRKVV) are compositionally biased toward basic and acidic residues. Residue Asn994 is glycosylated (N-linked (GlcNAc...) asparagine). Residues 1005 to 1014 (ESTTTSSNSR) are compositionally biased toward polar residues. Residues 1062-1074 (NGGNSRQGNTKKS) show a composition bias toward polar residues. Residues 1233–1253 (LGLSLLFFMIMQVFFLNFKHA) traverse the membrane as a helical segment.

This sequence belongs to the peptidase S8 family. Furin subfamily. Ca(2+) serves as cofactor. As to expression, in adults, isoform 1-X is expressed in CNS, fat body and female reproductive tissues, and in embryos, in CNS, tracheal pits, hindgut, posterior spiracles and anal pads.

It is found in the golgi apparatus membrane. It carries out the reaction Release of mature proteins from their proproteins by cleavage of -Arg-Xaa-Yaa-Arg-|-Zaa- bonds, where Xaa can be any amino acid and Yaa is Arg or Lys. Releases albumin, complement component C3 and von Willebrand factor from their respective precursors.. Functionally, furin is likely to represent the ubiquitous endoprotease activity within constitutive secretory pathways and capable of cleavage at the RX(K/R)R consensus motif. In Drosophila melanogaster (Fruit fly), this protein is Furin-like protease 1, isoforms 1/1-X/2 (Fur1).